We begin with the raw amino-acid sequence, 348 residues long: Propane 2-monooxygenase, reductase component (348 aa).

Residues histidine 5–aspartate 95 form the 2Fe-2S ferredoxin-type domain. [2Fe-2S] cluster-binding residues include cysteine 39, cysteine 44, cysteine 47, and cysteine 79. The 102-residue stretch at isoleucine 105 to lysine 206 folds into the FAD-binding FR-type domain.

The protein belongs to the bacterial ring-hydroxylating dioxygenase ferredoxin reductase family. The propane 2-monooxygenase multicomponent enzyme system is composed of an electron transfer component and a monooxygenase component interacting with the effector protein MimD. The electron transfer component is composed of a reductase (MimB), and the monooxygenase component is formed by a large subunit (MimA) and a small subunit (MimC). The cofactor is FAD. Requires [2Fe-2S] cluster as cofactor.

Functionally, reductase component of the propane 2-monooxygenase multicomponent enzyme system which is involved in the degradation of propane via the O2-dependent hydroxylation of propane. Reductase catalyzes the transfer of electrons from NADH or NADPH to monooxygenase. The polypeptide is Propane 2-monooxygenase, reductase component (Mycolicibacterium smegmatis (strain ATCC 700084 / mc(2)155) (Mycobacterium smegmatis)).